The chain runs to 266 residues: 4-hydroxy-tetrahydrodipicolinate reductase (266 aa).

10–15 (GPRGRM) is an NAD(+) binding site. Lys-38 is a binding site for NADP(+). NAD(+)-binding positions include 99–101 (GTT) and 125–128 (APNF). The Proton donor/acceptor role is filled by His-155. Position 156 (His-156) interacts with (S)-2,3,4,5-tetrahydrodipicolinate. The Proton donor role is filled by Lys-159. Residue 165 to 166 (GT) participates in (S)-2,3,4,5-tetrahydrodipicolinate binding.

The protein belongs to the DapB family.

It localises to the cytoplasm. It catalyses the reaction (S)-2,3,4,5-tetrahydrodipicolinate + NAD(+) + H2O = (2S,4S)-4-hydroxy-2,3,4,5-tetrahydrodipicolinate + NADH + H(+). The catalysed reaction is (S)-2,3,4,5-tetrahydrodipicolinate + NADP(+) + H2O = (2S,4S)-4-hydroxy-2,3,4,5-tetrahydrodipicolinate + NADPH + H(+). The protein operates within amino-acid biosynthesis; L-lysine biosynthesis via DAP pathway; (S)-tetrahydrodipicolinate from L-aspartate: step 4/4. In terms of biological role, catalyzes the conversion of 4-hydroxy-tetrahydrodipicolinate (HTPA) to tetrahydrodipicolinate. This Bacillus thuringiensis subsp. konkukian (strain 97-27) protein is 4-hydroxy-tetrahydrodipicolinate reductase.